A 196-amino-acid polypeptide reads, in one-letter code: uncharacterized protein (196 aa).

A helical transmembrane segment spans residues 26–46 (ITFFFILLICFICILLLLAIF).

It localises to the membrane. This is an uncharacterized protein from Mus musculus (Mouse).